Here is a 735-residue protein sequence, read N- to C-terminus: Ion-translocating oxidoreductase complex subunit C (735 aa).

4Fe-4S ferredoxin-type domains lie at 368–397 (MGAP…QQLY) and 407–436 (KATA…VQYF). [4Fe-4S] cluster-binding residues include cysteine 377, cysteine 380, cysteine 383, cysteine 387, cysteine 416, cysteine 419, cysteine 422, and cysteine 426. The interval 534 to 711 (QARAKQAAHP…EPVEPADPRK (178 aa)) is disordered.

It belongs to the 4Fe4S bacterial-type ferredoxin family. RnfC subfamily. The complex is composed of six subunits: RsxA, RsxB, RsxC, RsxD, RsxE and RsxG. It depends on [4Fe-4S] cluster as a cofactor.

It localises to the cell inner membrane. Part of a membrane-bound complex that couples electron transfer with translocation of ions across the membrane. Required to maintain the reduced state of SoxR. This Salmonella paratyphi A (strain ATCC 9150 / SARB42) protein is Ion-translocating oxidoreductase complex subunit C.